A 485-amino-acid polypeptide reads, in one-letter code: MGIFRFISISLAAVSAANAGHILSMGHAKTIPNSYIVVMKDGTTKEDFTHHQSWVQSIHTHNVTRRGLLDNAGVRHKYGFGSMMGYAGLFDEDTIKDISDDPKVMFVEPDTTITIHGELTQNDVPSWGLARISSQRPGTEDYTYDSSAGEGITVYSVDTGVDIHHEDFEGRASWGTNMIEDGYDKDGNGHGTHTAGTMVGKTFGIAKKAKVVAVKVLDNNGSGPTSGIIAGINWCAQHASQNGGTDKAVINMSLGGGSSSALNRAAAQAVQKGMFLAVAAGNDNQDARTSSPASEDTVCTVGASAENDERSSFSNWGPAVDLFAPGSNIVSTRPGGGSQSMSGTSMASPHVAGLGAYIMALEGISGSAVCDRLKQLGTSSVTNPGPGTRTNILINNGDAKNGGKKPSQPSQPPKPSQPSKPQQPSEPQEPSEPQEPAPGQPAPAPAPVPQHPHTPFPNDDFNFDDFWKKYFGTDHWRKTFGRFWN.

The signal sequence occupies residues 1-19 (MGIFRFISISLAAVSAANA). A propeptide spanning residues 20-116 (GHILSMGHAK…VEPDTTITIH (97 aa)) is cleaved from the precursor. In terms of domain architecture, Inhibitor I9 spans 34-116 (SYIVVMKDGT…VEPDTTITIH (83 aa)). A Peptidase S8 domain is found at 126–400 (SWGLARISSQ…NILINNGDAK (275 aa)). Active-site charge relay system residues include Asp-158 and His-190. Residue Asn-251 is glycosylated (N-linked (GlcNAc...) asparagine). The active-site Charge relay system is Ser-345. A compositionally biased stretch (polar residues) spans 377 to 394 (GTSSVTNPGPGTRTNILI). Positions 377–462 (GTSSVTNPGP…HTPFPNDDFN (86 aa)) are disordered. Positions 409 to 418 (PSQPPKPSQP) are enriched in pro residues. The segment covering 419-428 (SKPQQPSEPQ) has biased composition (low complexity). The segment covering 433–455 (PQEPAPGQPAPAPAPVPQHPHTP) has biased composition (pro residues).

This sequence belongs to the peptidase S8 family.

It is found in the secreted. In terms of biological role, secreted subtilisin-like serine protease with keratinolytic activity that contributes to pathogenicity. The polypeptide is Subtilisin-like protease 1 (SUB1) (Arthroderma otae (Microsporum canis)).